The primary structure comprises 242 residues: Uridylate kinase (242 aa).

11–14 provides a ligand contact to ATP; that stretch reads KLSG. An involved in allosteric activation by GTP region spans residues 19–24; it reads GEKGAG. Glycine 53 provides a ligand contact to UMP. 2 residues coordinate ATP: glycine 54 and arginine 58. Residues aspartate 73 and 134 to 141 contribute to the UMP site; that span reads IGSPYFST. ATP contacts are provided by asparagine 162, tyrosine 168, and aspartate 171.

Belongs to the UMP kinase family. Homohexamer.

The protein resides in the cytoplasm. The catalysed reaction is UMP + ATP = UDP + ADP. The protein operates within pyrimidine metabolism; CTP biosynthesis via de novo pathway; UDP from UMP (UMPK route): step 1/1. Its activity is regulated as follows. Allosterically activated by GTP. Inhibited by UTP. Catalyzes the reversible phosphorylation of UMP to UDP. This chain is Uridylate kinase, found in Streptococcus pyogenes serotype M2 (strain MGAS10270).